The following is an 865-amino-acid chain: LINE-1 type transposase domain-containing protein 1 (865 aa).

Position 2 is an N-acetylserine (serine 2). Position 2 is a phosphoserine (serine 2). At threonine 149 the chain carries Phosphothreonine. Serine 154 carries the post-translational modification Phosphoserine. Residues 370–508 are disordered; that stretch reads EMKNLETQEE…EKKASRRQKE (139 aa). Composition is skewed to acidic residues over residues 376 to 440 and 472 to 483; these read TQEE…EQTS and SVEDSESEEEEE. A phosphoserine mark is found at serine 472, serine 476, and serine 478. The span at 498–508 shows a compositional bias: basic and acidic residues; sequence TEKKASRRQKE. A phosphoserine mark is found at serine 518, serine 561, and serine 573. The span at 590–608 shows a compositional bias: basic and acidic residues; the sequence is EEKKHRTLHTEELTSKEAD. The interval 590–612 is disordered; the sequence is EEKKHRTLHTEELTSKEADLTEE. Phosphoserine occurs at positions 640, 648, and 665. Residues 642–684 adopt a coiled-coil conformation; sequence VLEIENSVDDLSSRMDILEERIDSLEDQIEEFSKDTMQMTKQI.

Belongs to the transposase 22 family.

This chain is LINE-1 type transposase domain-containing protein 1 (L1TD1), found in Homo sapiens (Human).